A 358-amino-acid chain; its full sequence is Microbial Terpene synthase-like protein 13 (358 aa).

This sequence belongs to the terpene synthase family.

In terms of biological role, no terpene synthase activity detected in vitro. This chain is Microbial Terpene synthase-like protein 13, found in Selaginella moellendorffii (Spikemoss).